Reading from the N-terminus, the 527-residue chain is Glucose transporter 1B/1C/1D/1F/2B (527 aa).

The segment at 1 to 22 (MTERRDNVSHAPDAIEGPNDGA) is disordered. Residues 1–43 (MTERRDNVSHAPDAIEGPNDGAHAEDTSPGFFSLENLGVAQVQ) are Cytoplasmic-facing. Residues 44 to 64 (VVGGTLNGYVIGYVAVYLLLY) traverse the membrane as a helical segment. At 65 to 118 (LTATECKFTTEGACGGRKIYGCKWSGTTCKFENPKCSEGSDPSDSCKNEVAYTS) the chain is on the extracellular side. A helical transmembrane segment spans residues 119-139 (VYSGIFACAMIVGSMVGSIIA). At 140 to 151 (GKCITTFGLKKS) the chain is on the cytoplasmic side. Residues 152 to 172 (FIIVSITCTIACVVVQVAIEY) traverse the membrane as a helical segment. Topologically, residues 173–175 (NNY) are extracellular. Residues 176–196 (YALCTGRVLIGLGVGILCSVF) form a helical membrane-spanning segment. Topologically, residues 197-213 (PMYVNENAHPKLCKMDG) are cytoplasmic. Residues 214–234 (VLFQVFTTLGIMLAAMLGLIL) traverse the membrane as a helical segment. The Extracellular portion of the chain corresponds to 235-249 (DKTGASKEEANMAGR). The chain crosses the membrane as a helical span at residues 250-270 (LHVFSAVPLGLSVAMFLVGMF). Over 271–299 (LRESTATFAQDDDGKADGGMDPNEYGWGQ) the chain is Cytoplasmic. Residues 300-320 (MLWPLFMGAVTAGTLQLTGIN) traverse the membrane as a helical segment. The Extracellular portion of the chain corresponds to 321-338 (AVMNYAPKITENLGMDPS). The helical transmembrane segment at 339-359 (LGNFLVMAWNFVTSLVAIPLA) threads the bilayer. Topologically, residues 360–372 (SRFTMRQMFITCS) are cytoplasmic. A helical transmembrane segment spans residues 373–393 (FVASCMCLFLCGIPVFPGVAG). At 394–403 (KEVKNGVATT) the chain is on the extracellular side. The helical transmembrane segment at 404 to 424 (GIALFIAAFEFGVGSCFFVLA) threads the bilayer. Residues 425 to 436 (QDLFPPSFRPKG) lie on the Cytoplasmic side of the membrane. The helical transmembrane segment at 437–457 (GSFVVMMQFIFNILINLLYPI) threads the bilayer. The Extracellular portion of the chain corresponds to 458-475 (TTEAISGGATGNQDKGQA). A helical membrane pass occupies residues 476 to 496 (VAFILFGLIGLICSVLQFFYL). The Cytoplasmic segment spans residues 497 to 527 (YPYDANQDHENDHGGEPVEQKTYPVEASPRN). The span at 506–515 (ENDHGGEPVE) shows a compositional bias: basic and acidic residues. The disordered stretch occupies residues 506–527 (ENDHGGEPVEQKTYPVEASPRN).

This sequence belongs to the major facilitator superfamily. Sugar transporter (TC 2.A.1.1) family.

The protein localises to the membrane. Facilitative glucose transporter. This chain is Glucose transporter 1B/1C/1D/1F/2B (THT1B), found in Trypanosoma brucei brucei.